A 264-amino-acid polypeptide reads, in one-letter code: Carbonic anhydrase (264 aa).

The tat-type signal signal peptide spans methionine 1–alanine 33. In terms of domain architecture, Alpha-carbonic anhydrase spans valine 36 to isoleucine 264. Positions 127, 129, and 146 each coordinate Zn(2+). Threonine 214–threonine 215 provides a ligand contact to substrate.

Belongs to the alpha-carbonic anhydrase family. It depends on Zn(2+) as a cofactor. Predicted to be exported by the Tat system. The position of the signal peptide cleavage has not been experimentally proven.

The catalysed reaction is hydrogencarbonate + H(+) = CO2 + H2O. In terms of biological role, reversible hydration of carbon dioxide. This is Carbonic anhydrase (ecaA) from Nostoc sp. (strain PCC 7120 / SAG 25.82 / UTEX 2576).